We begin with the raw amino-acid sequence, 322 residues long: DNA repair and recombination protein RadA (322 aa).

G105–T112 is a binding site for ATP.

Belongs to the eukaryotic RecA-like protein family.

Involved in DNA repair and in homologous recombination. Binds and assemble on single-stranded DNA to form a nucleoprotein filament. Hydrolyzes ATP in a ssDNA-dependent manner and promotes DNA strand exchange between homologous DNA molecules. The sequence is that of DNA repair and recombination protein RadA from Methanococcus maripaludis (strain C6 / ATCC BAA-1332).